A 255-amino-acid chain; its full sequence is Pimeloyl-[acyl-carrier protein] methyl ester esterase (255 aa).

The AB hydrolase-1 domain occupies 16–241 (LVLVHGWGMN…QSSHAPFMTE (226 aa)). Substrate is bound by residues W22, 82-83 (SL), and 143-147 (FMALQ). The active-site Nucleophile is the S82. Active-site residues include D207 and H235. Residue H235 participates in substrate binding.

The protein belongs to the AB hydrolase superfamily. Carboxylesterase BioH family. Monomer.

It localises to the cytoplasm. It carries out the reaction 6-carboxyhexanoyl-[ACP] methyl ester + H2O = 6-carboxyhexanoyl-[ACP] + methanol + H(+). Its pathway is cofactor biosynthesis; biotin biosynthesis. Its function is as follows. The physiological role of BioH is to remove the methyl group introduced by BioC when the pimeloyl moiety is complete. It allows to synthesize pimeloyl-ACP via the fatty acid synthetic pathway through the hydrolysis of the ester bonds of pimeloyl-ACP esters. This is Pimeloyl-[acyl-carrier protein] methyl ester esterase from Vibrio cholerae serotype O1 (strain ATCC 39315 / El Tor Inaba N16961).